Reading from the N-terminus, the 702-residue chain is Ribosomal RNA large subunit methyltransferase K/L (702 aa).

Positions 43-154 constitute a THUMP domain; that stretch reads LIYQSLMWSR…KETASIALDL (112 aa).

This sequence belongs to the methyltransferase superfamily. RlmKL family.

It is found in the cytoplasm. The catalysed reaction is guanosine(2445) in 23S rRNA + S-adenosyl-L-methionine = N(2)-methylguanosine(2445) in 23S rRNA + S-adenosyl-L-homocysteine + H(+). It catalyses the reaction guanosine(2069) in 23S rRNA + S-adenosyl-L-methionine = N(2)-methylguanosine(2069) in 23S rRNA + S-adenosyl-L-homocysteine + H(+). In terms of biological role, specifically methylates the guanine in position 2445 (m2G2445) and the guanine in position 2069 (m7G2069) of 23S rRNA. This is Ribosomal RNA large subunit methyltransferase K/L from Salmonella agona (strain SL483).